The chain runs to 205 residues: Ribosomal RNA small subunit methyltransferase G (205 aa).

S-adenosyl-L-methionine contacts are provided by residues Gly76, Leu81, 127 to 128 (IE), and Arg140.

The protein belongs to the methyltransferase superfamily. RNA methyltransferase RsmG family.

The protein localises to the cytoplasm. The catalysed reaction is guanosine(527) in 16S rRNA + S-adenosyl-L-methionine = N(7)-methylguanosine(527) in 16S rRNA + S-adenosyl-L-homocysteine. Specifically methylates the N7 position of guanine in position 527 of 16S rRNA. This Francisella tularensis subsp. novicida (strain U112) protein is Ribosomal RNA small subunit methyltransferase G.